The chain runs to 501 residues: Fumarate reductase 2 (501 aa).

The N-terminal 32 residues, methionine 1–serine 32, are a transit peptide targeting the mitochondrion. An FAD-binding site is contributed by valine 37–asparagine 51. Residues histidine 281 and arginine 304 contribute to the active site.

Belongs to the FAD-dependent oxidoreductase 2 family. FRD/SDH subfamily. FAD serves as cofactor.

The protein resides in the mitochondrion. It carries out the reaction succinate + NAD(+) = fumarate + NADH + H(+). In terms of biological role, irreversibly catalyzes the reduction of fumarate to succinate. Together with the second isozyme of soluble fumarate reductase (FRD1), essential for anaerobic growth. Involved in maintaining redox balance during oxygen deficiency conditions. Reduction of fumarate is the main source of succinate during fermentation, and under anaerobic conditions, the formation of succinate is strictly required for the reoxidation of FADH(2). The protein is Fumarate reductase 2 (OSM1) of Saccharomyces cerevisiae (strain ATCC 204508 / S288c) (Baker's yeast).